Here is a 783-residue protein sequence, read N- to C-terminus: Protein transport protein SEC23 B (783 aa).

Zn(2+) contacts are provided by C59, C62, C81, and C84. Residues 59–84 (CRICTAALNPFARVDFLAKIWICPIC) form a zinc finger-like region.

This sequence belongs to the SEC23/SEC24 family. SEC23 subfamily. As to quaternary structure, component of the coat protein complex II (COPII), composed of at least five proteins: the Sec23/24 complex, the Sec13/31 complex and Sar1. Interacts with SEC24A.

It is found in the cytoplasmic vesicle. The protein resides in the COPII-coated vesicle membrane. It localises to the endoplasmic reticulum membrane. Its subcellular location is the membrane. Its function is as follows. Component of the coat protein complex II (COPII) which promotes the formation of transport vesicles from the endoplasmic reticulum (ER). The coat has two main functions, the physical deformation of the endoplasmic reticulum membrane into vesicles and the selection of cargo molecules. This Arabidopsis thaliana (Mouse-ear cress) protein is Protein transport protein SEC23 B.